The sequence spans 356 residues: MSGKELRYGFTTGACAAAAVKAAAQMLRDQGMVHEVELMLPCGIGASFQVHGGVLRDNTASCYVVKDAGDDPDVTNGAEIHVTASIEFFTKNRIVIEGGTGIGRVTKPGLAVPVGEWAINPVPRSMILEVVKEVFALRCIPATLTFNISIPNGEELAKKTLNERLGIVGGLSILGTTGIVKPISAKAWTDTVDASVDVALACGARTVVLATGRSSEIVAQKHLALSEEAFVMMGDHFGYAMRSCASKEVPEVVVAGQFAKLVKIACGHEQTHVTSSQMDLDALAWWLREVPATAHLEQMAREANTARHLLEASGYNQAVIELVCSRVLKVCAEVAPWVKMRVMLAGYHGELLYFTP.

It belongs to the CbiD family.

The catalysed reaction is Co-precorrin-5B + S-adenosyl-L-methionine = Co-precorrin-6A + S-adenosyl-L-homocysteine. The protein operates within cofactor biosynthesis; adenosylcobalamin biosynthesis; cob(II)yrinate a,c-diamide from sirohydrochlorin (anaerobic route): step 6/10. Catalyzes the methylation of C-1 in cobalt-precorrin-5B to form cobalt-precorrin-6A. This is Cobalt-precorrin-5B C(1)-methyltransferase from Citrifermentans bemidjiense (strain ATCC BAA-1014 / DSM 16622 / JCM 12645 / Bem) (Geobacter bemidjiensis).